We begin with the raw amino-acid sequence, 142 residues long: gSG7 salivary protein (142 aa).

An N-terminal signal peptide occupies residues 1–26; it reads MAARMTIMLPLAVALICLLQTEPGMA. 2 disulfides stabilise this stretch: C84/C139 and C107/C117.

The protein resides in the secreted. In terms of biological role, salivary protein that moderately inhibits the alternative pathway for complement system activation in the host. This chain is gSG7 salivary protein, found in Anopheles darlingi (Mosquito).